Here is a 102-residue protein sequence, read N- to C-terminus: Parathymosin (102 aa).

The tract at residues 1 to 102 (MSEKSVEAAA…RQKTENGASA (102 aa)) is disordered. The residue at position 2 (Ser2) is an N-acetylserine. Position 2 is a phosphoserine (Ser2). Residue Lys4 is modified to N6-acetyllysine. Phosphoserine is present on residues Ser5 and Ser13. Positions 13–37 (SAKDLKEKKEKVEEKASRKERKKEV) are enriched in basic and acidic residues. Position 15 is an N6-acetyllysine (Lys15). The span at 38-76 (VEEEENGAEEEEEETAEDGEEEDEGEEEDEEEEEEDDEG) shows a compositional bias: acidic residues. The residue at position 52 (Thr52) is a Phosphothreonine. Lys92 bears the N6-acetyllysine mark.

The protein belongs to the pro/parathymosin family.

Functionally, parathymosin may mediate immune function by blocking the effect of prothymosin alpha which confers resistance to certain opportunistic infections. The sequence is that of Parathymosin (PTMS) from Homo sapiens (Human).